A 293-amino-acid polypeptide reads, in one-letter code: F-box only protein 6 (293 aa).

The 48-residue stretch at 10–57 folds into the F-box domain; it reads LDSINELPENILLELFTHVPARQLLLNCRLVCSLWRDLIDLMTLWKRK. The FBA domain occupies 78–259; sequence FYFLRSLHRN…VTNSSIVVSP (182 aa). Serine 258 is modified (phosphoserine). Residues 261–271 are compositionally biased toward polar residues; the sequence is MTRNQASSEAQ. The tract at residues 261–285 is disordered; the sequence is MTRNQASSEAQPGQKHGQEEAAQSP. The residue at position 284 (serine 284) is a Phosphoserine.

In terms of assembly, interacts with VCP. Part of a SCF (SKP1-cullin-F-box) protein ligase complex. Interacts with CHEK1 and CUL1.

It localises to the cytoplasm. The protein operates within protein modification; protein ubiquitination. Substrate-recognition component of some SCF (SKP1-CUL1-F-box protein)-type E3 ubiquitin ligase complexes. Involved in endoplasmic reticulum-associated degradation pathway (ERAD) for misfolded lumenal proteins by recognizing and binding sugar chains on unfolded glycoproteins that are retrotranslocated into the cytosol and promoting their ubiquitination and subsequent degradation. Able to recognize and bind denatured glycoproteins, which are modified with not only high-mannose but also complex-type oligosaccharides. Also recognizes sulfated glycans. Also involved in DNA damage response by specifically recognizing activated CHEK1 (phosphorylated on 'Ser-345'), promoting its ubiquitination and degradation. Ubiquitination of CHEK1 is required to ensure that activated CHEK1 does not accumulate as cells progress through S phase, or when replication forks encounter transient impediments during normal DNA replication. In Homo sapiens (Human), this protein is F-box only protein 6 (FBXO6).